The sequence spans 151 residues: Abdominal ganglion neuropeptide L11 (151 aa).

The first 25 residues, 1 to 25, serve as a signal peptide directing secretion; sequence MPCTPNSHRLLLVTALCLLITSLFA.

It localises to the secreted. The sequence is that of Abdominal ganglion neuropeptide L11 from Aplysia californica (California sea hare).